A 468-amino-acid chain; its full sequence is ATP synthase subunit beta (468 aa).

ATP is bound at residue 148-155 (GGAGVGKT).

This sequence belongs to the ATPase alpha/beta chains family. As to quaternary structure, F-type ATPases have 2 components, CF(1) - the catalytic core - and CF(0) - the membrane proton channel. CF(1) has five subunits: alpha(3), beta(3), gamma(1), delta(1), epsilon(1). CF(0) has three main subunits: a(1), b(2) and c(9-12). The alpha and beta chains form an alternating ring which encloses part of the gamma chain. CF(1) is attached to CF(0) by a central stalk formed by the gamma and epsilon chains, while a peripheral stalk is formed by the delta and b chains.

The protein resides in the cell inner membrane. The catalysed reaction is ATP + H2O + 4 H(+)(in) = ADP + phosphate + 5 H(+)(out). Produces ATP from ADP in the presence of a proton gradient across the membrane. The catalytic sites are hosted primarily by the beta subunits. In Xanthomonas campestris pv. campestris (strain B100), this protein is ATP synthase subunit beta.